The following is a 144-amino-acid chain: 3-dehydroquinate dehydratase (144 aa).

Catalysis depends on Tyr-24, which acts as the Proton acceptor. The substrate site is built by Asn-76, His-82, and Asp-89. The Proton donor role is filled by His-102. Substrate is bound by residues Leu-103–Ser-104 and Arg-113.

This sequence belongs to the type-II 3-dehydroquinase family. As to quaternary structure, homododecamer.

The catalysed reaction is 3-dehydroquinate = 3-dehydroshikimate + H2O. It participates in metabolic intermediate biosynthesis; chorismate biosynthesis; chorismate from D-erythrose 4-phosphate and phosphoenolpyruvate: step 3/7. Its function is as follows. Catalyzes a trans-dehydration via an enolate intermediate. The chain is 3-dehydroquinate dehydratase from Bordetella bronchiseptica (strain ATCC BAA-588 / NCTC 13252 / RB50) (Alcaligenes bronchisepticus).